A 101-amino-acid polypeptide reads, in one-letter code: Putative pterin-4-alpha-carbinolamine dehydratase (101 aa).

This sequence belongs to the pterin-4-alpha-carbinolamine dehydratase family.

It catalyses the reaction (4aS,6R)-4a-hydroxy-L-erythro-5,6,7,8-tetrahydrobiopterin = (6R)-L-erythro-6,7-dihydrobiopterin + H2O. This Ralstonia pickettii (strain 12J) protein is Putative pterin-4-alpha-carbinolamine dehydratase.